The following is a 490-amino-acid chain: C-type lectin domain family 14 member A (490 aa).

Residues 1-21 form the signal peptide; the sequence is MRPAFALCLLWQALWPGPGGG. Over 22-397 the chain is Extracellular; the sequence is EHPTADRAGC…TPQAFDSSSA (376 aa). The C-type lectin domain maps to 33 to 173; it reads ASGACYSLHH…LRANGYLCKY (141 aa). C143 and C162 form a disulfide bridge. N189 carries N-linked (GlcNAc...) asparagine glycosylation. Residues 245–287 enclose the EGF-like domain; the sequence is PCPGRYLRAGKCAELPNCLDDLGGFACECATGFELGKDGRSCV. The tract at residues 286 to 349 is disordered; the sequence is CVTSGEGQPT…VTSIPEIPRW (64 aa). Positions 301–315 are enriched in low complexity; that stretch reads VPTRRPPATATSPVP. N381 carries N-linked (GlcNAc...) asparagine glycosylation. Residues 398–418 form a helical membrane-spanning segment; the sequence is VVFIFVSTAVVVLVILTMTVL. Residues 419–490 are Cytoplasmic-facing; that stretch reads GLVKLCFHES…AESPLGSSDA (72 aa). The tract at residues 428–461 is disordered; it reads SPSSQPRKESMGPPGLESDPEPAALGSSSAHCTN.

The protein resides in the membrane. The chain is C-type lectin domain family 14 member A (CLEC14A) from Homo sapiens (Human).